The primary structure comprises 153 residues: 3-hydroxyacyl-[acyl-carrier-protein] dehydratase FabZ (153 aa).

H57 is an active-site residue.

It belongs to the thioester dehydratase family. FabZ subfamily.

The protein resides in the cytoplasm. The catalysed reaction is a (3R)-hydroxyacyl-[ACP] = a (2E)-enoyl-[ACP] + H2O. Its function is as follows. Involved in unsaturated fatty acids biosynthesis. Catalyzes the dehydration of short chain beta-hydroxyacyl-ACPs and long chain saturated and unsaturated beta-hydroxyacyl-ACPs. This chain is 3-hydroxyacyl-[acyl-carrier-protein] dehydratase FabZ, found in Xanthomonas campestris pv. campestris (strain 8004).